The following is a 188-amino-acid chain: Photosystem I assembly protein Ycf4 (188 aa).

The next 2 helical transmembrane spans lie at 26-48 and 68-90; these read MLWA…SSYF and AALT…VFFL.

The protein belongs to the Ycf4 family.

It is found in the cellular thylakoid membrane. Seems to be required for the assembly of the photosystem I complex. The sequence is that of Photosystem I assembly protein Ycf4 from Picosynechococcus sp. (strain ATCC 27264 / PCC 7002 / PR-6) (Agmenellum quadruplicatum).